The following is a 531-amino-acid chain: Maturase K (531 aa).

This sequence belongs to the intron maturase 2 family. MatK subfamily.

It localises to the plastid. The protein localises to the chloroplast. Its function is as follows. Usually encoded in the trnK tRNA gene intron. Probably assists in splicing its own and other chloroplast group II introns. The protein is Maturase K of Ephedra sinica (Chinese ephedra).